The chain runs to 546 residues: E3 ubiquitin-protein ligase NEURL1B (546 aa).

In terms of domain architecture, NHR 1 spans 38–194 (APRFHAQAKG…ITDEVQLLES (157 aa)). Phosphothreonine is present on T199. The NHR 2 domain occupies 270–424 (ELRFHATRGP…GVAGQLRLLG (155 aa)). A disordered region spans residues 429–490 (SSETMTPSGS…FSAPEPTGSR (62 aa)). The segment covering 457–471 (SSSASESSLVTAPSS) has biased composition (low complexity). The segment at 494–534 (CTVCFDSEVDTVIYTCGHMCLCHGCGLRLRRQARACCPICR) adopts an RING-type zinc-finger fold.

Interacts with DLL1 and DLL4. Expressed in the limb buds and dorsal root ganglia. Expressed in brain and kidney and at low levels in the heart.

It localises to the cytoplasm. It carries out the reaction S-ubiquitinyl-[E2 ubiquitin-conjugating enzyme]-L-cysteine + [acceptor protein]-L-lysine = [E2 ubiquitin-conjugating enzyme]-L-cysteine + N(6)-ubiquitinyl-[acceptor protein]-L-lysine.. It functions in the pathway protein modification; protein ubiquitination. Its function is as follows. E3 ubiquitin-protein ligase involved in regulation of the Notch pathway through influencing the stability and activity of several Notch ligands. This chain is E3 ubiquitin-protein ligase NEURL1B (Neurl1b), found in Mus musculus (Mouse).